Reading from the N-terminus, the 93-residue chain is Phosphoribosyl-ATP pyrophosphatase (93 aa).

It belongs to the PRA-PH family.

The protein localises to the cytoplasm. The catalysed reaction is 1-(5-phospho-beta-D-ribosyl)-ATP + H2O = 1-(5-phospho-beta-D-ribosyl)-5'-AMP + diphosphate + H(+). It functions in the pathway amino-acid biosynthesis; L-histidine biosynthesis; L-histidine from 5-phospho-alpha-D-ribose 1-diphosphate: step 2/9. In Rhodococcus jostii (strain RHA1), this protein is Phosphoribosyl-ATP pyrophosphatase.